Reading from the N-terminus, the 589-residue chain is Alpha-1,2-mannosyltransferase MNN22 (589 aa).

Topologically, residues 1–16 are cytoplasmic; the sequence is MGSIFKDGRRILVRPK. The helical transmembrane segment at 17 to 33 threads the bilayer; it reads SLIICLCLISIIFTQLI. Over 34 to 589 the chain is Extracellular; it reads RYQYQLIADE…NTIAWLGKKT (556 aa). The tract at residues 50–77 is disordered; sequence EDHSSSQSLKNTKLNSTRSSSPISPPKS. A compositionally biased stretch (polar residues) spans 54 to 71; the sequence is SSQSLKNTKLNSTRSSSP. N-linked (GlcNAc...) asparagine glycans are attached at residues N64, N332, and N530.

It belongs to the MNN1/MNT family.

The protein resides in the golgi apparatus membrane. It participates in protein modification; protein glycosylation. Alpha-1,2-mannosyltransferase required for cell wall integrity. Responsible for addition of the first alpha-1,2-linked mannose to form the branches on the mannan backbone of oligosaccharides. Addition of alpha-1,2-mannose is required for stabilization of the alpha-1,6-mannose backbone and hence regulates mannan fibril length; and is important for both immune recognition and virulence. The protein is Alpha-1,2-mannosyltransferase MNN22 (MNN22) of Candida albicans (strain SC5314 / ATCC MYA-2876) (Yeast).